The following is a 283-amino-acid chain: UPF0276 protein Nmul_A2550 (283 aa).

Belongs to the UPF0276 family.

In Nitrosospira multiformis (strain ATCC 25196 / NCIMB 11849 / C 71), this protein is UPF0276 protein Nmul_A2550.